A 462-amino-acid polypeptide reads, in one-letter code: Putative endoglucanase type B (462 aa).

Positions 1-16 (MAYKLILAAFAATALA) are cleaved as a signal peptide. Residues 25-61 (CSNGVWAQCGGQNWSGTPCCTSGNKCVKLNDFYSQCQ) form the CBM1 domain. 2 disulfide bridges follow: Cys33–Cys50 and Cys44–Cys60. The N-linked (GlcNAc...) asparagine glycan is linked to Asn37. Low complexity predominate over residues 64–100 (SAEPSSTAAGPSSTTATKTTATGGSSTTAGGSVTSAP). Positions 64 to 102 (SAEPSSTAAGPSSTTATKTTATGGSSTTAGGSVTSAPPA) are disordered. The tract at residues 66–99 (EPSSTAAGPSSTTATKTTATGGSSTTAGGSVTSA) is linker. The interval 100 to 462 (PPAASDNPYA…LLDNANPSFL (363 aa)) is catalytic. The active site involves Asp190. Cys191 and Cys250 are oxidised to a cystine. An N-linked (GlcNAc...) asparagine glycan is attached at Asn223. Asp236 acts as the Proton donor in catalysis. N-linked (GlcNAc...) asparagine glycosylation is found at Asn272 and Asn317. Cysteines 383 and 430 form a disulfide. Residue Asp416 is the Nucleophile of the active site.

The protein belongs to the glycosyl hydrolase 6 (cellulase B) family.

It carries out the reaction Endohydrolysis of (1-&gt;4)-beta-D-glucosidic linkages in cellulose, lichenin and cereal beta-D-glucans.. In Fusarium oxysporum (Fusarium vascular wilt), this protein is Putative endoglucanase type B.